The sequence spans 534 residues: Cysteine/serine-rich nuclear protein 2 (534 aa).

Met1 is modified (N-acetylmethionine). 2 disordered regions span residues 1 to 52 (MDAF…FTPT) and 480 to 534 (DCGL…PLAV). Residues 31–40 (SSDSADSCDS) show a composition bias toward low complexity. Positions 42–52 (NPPTTASFTPT) are enriched in polar residues. Residues 480 to 492 (DCGLKEPESEDLH) are compositionally biased toward basic and acidic residues.

The protein belongs to the AXUD1 family. In terms of tissue distribution, highest expression detected in thymus, brain and ovary. Low levels detected in naive T-cells.

It localises to the nucleus. In terms of biological role, binds to the consensus sequence 5'-AGAGTG-3' and has transcriptional activator activity. May play a role in apoptosis. In Mus musculus (Mouse), this protein is Cysteine/serine-rich nuclear protein 2 (Csrnp2).